We begin with the raw amino-acid sequence, 307 residues long: Voltage-dependent anion channel-forming protein sll1024 (307 aa).

The next 4 membrane-spanning stretches (helical) occupy residues 26–46 (VIPA…GVTL), 54–74 (FSIP…LLVF), 226–246 (LIFL…HWAT), and 247–267 (AFVV…GVEI).

Belongs to the anion channel-forming bestrophin (TC 1.A.46) family.

It localises to the cell membrane. The polypeptide is Voltage-dependent anion channel-forming protein sll1024 (Synechocystis sp. (strain ATCC 27184 / PCC 6803 / Kazusa)).